We begin with the raw amino-acid sequence, 172 residues long: Large ribosomal subunit protein uL10 (172 aa).

Belongs to the universal ribosomal protein uL10 family. As to quaternary structure, part of the ribosomal stalk of the 50S ribosomal subunit. The N-terminus interacts with L11 and the large rRNA to form the base of the stalk. The C-terminus forms an elongated spine to which L12 dimers bind in a sequential fashion forming a multimeric L10(L12)X complex.

Functionally, forms part of the ribosomal stalk, playing a central role in the interaction of the ribosome with GTP-bound translation factors. The polypeptide is Large ribosomal subunit protein uL10 (Rhodospirillum centenum (strain ATCC 51521 / SW)).